A 116-amino-acid chain; its full sequence is Large ribosomal subunit protein uL18 (116 aa).

The protein belongs to the universal ribosomal protein uL18 family. In terms of assembly, part of the 50S ribosomal subunit; part of the 5S rRNA/L5/L18/L25 subcomplex. Contacts the 5S and 23S rRNAs.

In terms of biological role, this is one of the proteins that bind and probably mediate the attachment of the 5S RNA into the large ribosomal subunit, where it forms part of the central protuberance. This Acinetobacter baumannii (strain AB307-0294) protein is Large ribosomal subunit protein uL18.